Consider the following 402-residue polypeptide: Cytochrome b561 and DOMON domain-containing protein At4g17280 (402 aa).

Positions 1-31 (MSNHMSIMKFLNQILCLSLILSISMTTLSFA) are cleaved as a signal peptide. In terms of domain architecture, DOMON spans 54 to 171 (LDSFLHYTYE…GTINTVWQDG (118 aa)). Positions 183-379 (TSGNNVRSVS…LEAFTWYVVI (197 aa)) constitute a Cytochrome b561 domain. The next 2 helical transmembrane spans lie at 218-238 (IHGILNGVSWGIMMPLGAIIA) and 250-270 (AWFYIHVFCQASAYIIGVAGW). Residues His-219, His-255, and His-288 each coordinate heme b. Residues 290 to 310 (AIGIALFSLATVQVFAMFLRP) form a helical membrane-spanning segment. Position 324 (His-324) interacts with heme b. Transmembrane regions (helical) follow at residues 326-346 (TIGYTIIILGVVNVFKGLGIL) and 359-379 (IIVVLAIVATLLEAFTWYVVI).

Heme b serves as cofactor.

The protein localises to the membrane. May act as a catecholamine-responsive trans-membrane electron transporter. The protein is Cytochrome b561 and DOMON domain-containing protein At4g17280 of Arabidopsis thaliana (Mouse-ear cress).